Here is a 59-residue protein sequence, read N- to C-terminus: Zinc finger protein HVO_2753 (59 aa).

4 consecutive short sequence motifs (c(P)XCG motif) follow at residues 12-16, 29-33, 39-43, and 51-55; these read CVSCG, CPDCG, and CSKCR. Residues Cys-29 and Cys-32 each contribute to the Zn(2+) site. The Zn(2+) site is built by Cys-51 and Cys-54.

As to quaternary structure, monomer in solution.

Zinc-binding protein that binds only one zinc ion. Is required for swarming and biofilm formation. In Haloferax volcanii (strain ATCC 29605 / DSM 3757 / JCM 8879 / NBRC 14742 / NCIMB 2012 / VKM B-1768 / DS2) (Halobacterium volcanii), this protein is Zinc finger protein HVO_2753.